Here is a 235-residue protein sequence, read N- to C-terminus: Orotidine 5'-phosphate decarboxylase (235 aa).

Residues D9, K31, 58–67 (DLKFHDIPNT), T121, R180, Q190, G210, and R211 contribute to the substrate site. The active-site Proton donor is the K60.

The protein belongs to the OMP decarboxylase family. Type 1 subfamily. Homodimer.

The catalysed reaction is orotidine 5'-phosphate + H(+) = UMP + CO2. It functions in the pathway pyrimidine metabolism; UMP biosynthesis via de novo pathway; UMP from orotate: step 2/2. In terms of biological role, catalyzes the decarboxylation of orotidine 5'-monophosphate (OMP) to uridine 5'-monophosphate (UMP). The sequence is that of Orotidine 5'-phosphate decarboxylase from Nitratidesulfovibrio vulgaris (strain ATCC 29579 / DSM 644 / CCUG 34227 / NCIMB 8303 / VKM B-1760 / Hildenborough) (Desulfovibrio vulgaris).